Reading from the N-terminus, the 246-residue chain is Bis(5'-nucleosyl)-tetraphosphatase PrpE [asymmetrical] (246 aa).

Belongs to the PrpE family. Ni(2+) serves as cofactor.

The enzyme catalyses P(1),P(4)-bis(5'-guanosyl) tetraphosphate + H2O = GMP + GTP + 2 H(+). Functionally, asymmetrically hydrolyzes Ap4p to yield AMP and ATP. In Bacillus thuringiensis (strain Al Hakam), this protein is Bis(5'-nucleosyl)-tetraphosphatase PrpE [asymmetrical].